A 100-amino-acid polypeptide reads, in one-letter code: Large ribosomal subunit protein uL23 (100 aa).

This sequence belongs to the universal ribosomal protein uL23 family. As to quaternary structure, part of the 50S ribosomal subunit. Contacts protein L29, and trigger factor when it is bound to the ribosome.

Functionally, one of the early assembly proteins it binds 23S rRNA. One of the proteins that surrounds the polypeptide exit tunnel on the outside of the ribosome. Forms the main docking site for trigger factor binding to the ribosome. This chain is Large ribosomal subunit protein uL23, found in Shewanella sp. (strain MR-4).